A 336-amino-acid polypeptide reads, in one-letter code: Shematrin-like protein 1 (336 aa).

The N-terminal stretch at 1-16 is a signal peptide; the sequence is MLRFIAIVALIATVNA.

As to expression, prismatic layer of shell (at protein level). Expressed primarily in the mantle with highest level in the mantle edge and lower level in the mantle pallium.

The protein resides in the secreted. This chain is Shematrin-like protein 1, found in Pinctada maxima (Silver-lipped pearl oyster).